A 643-amino-acid polypeptide reads, in one-letter code: Phosphomethylpyrimidine synthase (643 aa).

Substrate-binding positions include Asn-248, Met-277, Tyr-306, His-342, Ser-362 to Gly-364, Asp-403 to Arg-406, and Glu-442. His-446 serves as a coordination point for Zn(2+). Residue Tyr-469 coordinates substrate. His-510 lines the Zn(2+) pocket. Residues Cys-590, Cys-593, and Cys-598 each coordinate [4Fe-4S] cluster.

This sequence belongs to the ThiC family. In terms of assembly, homodimer. It depends on [4Fe-4S] cluster as a cofactor.

The enzyme catalyses 5-amino-1-(5-phospho-beta-D-ribosyl)imidazole + S-adenosyl-L-methionine = 4-amino-2-methyl-5-(phosphooxymethyl)pyrimidine + CO + 5'-deoxyadenosine + formate + L-methionine + 3 H(+). It functions in the pathway cofactor biosynthesis; thiamine diphosphate biosynthesis. Functionally, catalyzes the synthesis of the hydroxymethylpyrimidine phosphate (HMP-P) moiety of thiamine from aminoimidazole ribotide (AIR) in a radical S-adenosyl-L-methionine (SAM)-dependent reaction. This chain is Phosphomethylpyrimidine synthase, found in Burkholderia multivorans (strain ATCC 17616 / 249).